A 926-amino-acid chain; its full sequence is Peripheral plasma membrane protein CASK (926 aa).

The Protein kinase domain occupies 12 to 276; that stretch reads YELCEVIGKG…VYEALNHPWL (265 aa). ATP is bound by residues 18–26 and lysine 41; that span reads IGKGPFSVV. Residue serine 51 is modified to Phosphoserine. Residue aspartate 141 is part of the active site. Residues serine 151 and serine 155 each carry the phosphoserine; by autocatalysis modification. Threonine 182 is subject to Phosphothreonine. The calmodulin-binding stretch occupies residues 305-315; it reads KGAVLAAVSSH. Residue serine 313 is modified to Phosphoserine. 2 consecutive L27 domains span residues 343–398 and 402–455; these read AERA…SPQI and PSDA…YSDE. The required for interaction with NRXN1 (via C-terminal tail) stretch occupies residues 482-909; that stretch reads MENVTRVRLV…DETIRHLEEA (428 aa). The PDZ domain maps to 490–571; sequence LVQFQKNTDE…SITFKIVPSY (82 aa). Phosphoserine occurs at positions 570 and 571. The disordered stretch occupies residues 574–610; that stretch reads QSSSCERDSPSTSRQSPANGHSSTNNSVSDLPSTTQP. The SH3 domain maps to 612–682; sequence GRQIYVRAQF…PSPELQEWRV (71 aa). Positions 739 to 911 constitute a Guanylate kinase-like domain; that stretch reads RKTLVLLGAH…TIRHLEEAVE (173 aa).

In the N-terminal section; belongs to the protein kinase superfamily. CAMK Ser/Thr protein kinase family. CaMK subfamily. This sequence belongs to the MAGUK family. In terms of assembly, CASK and LIN7 form a tripartite complex with CASKIN1. Component of the brain-specific heterotrimeric complex (LIN-10-LIN-2-LIN-7 complex) composed of at least APBA1, CASK, and LIN7, which associates with the motor protein KIF17 to transport vesicles along microtubules. Forms a heterotrimeric complex with DLG1 and LIN7B via their L27 domains. Identified in a complex with ACTN4, IQGAP1, MAGI2, NPHS1, SPTAN1 and SPTBN1. Part of a complex containing CASK, TBR1 and TSPYL2. Interacts with WHRN. Interacts (via the PDZ, SH3 and guanylate kinase-like domains) with NRXN1 (via C-terminus). Interacts with CASKIN1, APBA1, LIN7(A/B/C), and L27 domain of DLG1 and isoform 2 of DLG4. Interacts with FCHSD2. Interacts with KIRREL3. Interacts with TBR1. Interacts with TSPYL2. The cofactor is Unlike other protein kinases, does not require a divalent cation such as magnesium for catalytic activity..

The protein localises to the nucleus. It is found in the cytoplasm. Its subcellular location is the cell membrane. It carries out the reaction L-seryl-[protein] + ATP = O-phospho-L-seryl-[protein] + ADP + H(+). The enzyme catalyses L-threonyl-[protein] + ATP = O-phospho-L-threonyl-[protein] + ADP + H(+). With respect to regulation, differs from archetypal CaMK members in that the kinase domain exhibits a constitutively active conformation and the autoinhibitory region does not engage in direct contact with the ATP-binding cleft, although it still binds Ca(2+)/CAM. Its function is as follows. Multidomain scaffolding Mg(2+)-independent protein kinase that catalyzes the phosphotransfer from ATP to proteins such as NRXN1, and plays a role in synaptic transmembrane protein anchoring and ion channel trafficking. Contributes to neural development and regulation of gene expression via interaction with the transcription factor TBR1. Binds to cell-surface proteins, including amyloid precursor protein, neurexins, and syndecans. May mediate a link between the extracellular matrix and the actin cytoskeleton via its interaction with syndecan and with the actin/spectrin-binding protein 4.1. Component of the LIN-10-LIN-2-LIN-7 complex, which associates with the motor protein KIF17 to transport vesicles containing N-methyl-D-aspartate (NMDA) receptor subunit NR2B along microtubules. This is Peripheral plasma membrane protein CASK from Mus musculus (Mouse).